Consider the following 69-residue polypeptide: Photosystem I reaction center subunit IV (69 aa).

The protein belongs to the PsaE family.

It is found in the cellular thylakoid membrane. In terms of biological role, stabilizes the interaction between PsaC and the PSI core, assists the docking of the ferredoxin to PSI and interacts with ferredoxin-NADP oxidoreductase. This is Photosystem I reaction center subunit IV from Prochlorococcus marinus (strain MIT 9515).